A 154-amino-acid chain; its full sequence is Protein X (154 aa).

Positions 28-50 (RPLPGPLGAVPPSSPSAVPADDG) are disordered. Residues 33 to 48 (PLGAVPPSSPSAVPAD) show a composition bias toward low complexity. Positions 68-117 (PCALRFTSARRMETTVNAPWSLPTVLHKRTLGLSGWSMTWIEEYIKDCVF) are mitochondrial targeting sequence.

It belongs to the orthohepadnavirus protein X family. May form homodimer. May interact with host CEBPA, CFLAR, CREB1, DDB1, E4F1, HBXIP, HSPD1/HSP60, NFKBIA, POLR2E and SMAD4. Interacts with host SMC5-SMC6 complex and induces its degradation. Interacts with host TRPC4AP; leading to prevent ubiquitination of TRPC4AP. Interacts with host PLSCR1; this interaction promotes ubiquitination and degradation of HBx and impairs HBx-mediated cell proliferation. A fraction may be phosphorylated in insect cells and HepG2 cells, a human hepatoblastoma cell line. Phosphorylated in vitro by host protein kinase C or mitogen-activated protein kinase. N-acetylated in insect cells.

It is found in the host cytoplasm. The protein localises to the host nucleus. The protein resides in the host mitochondrion. In terms of biological role, multifunctional protein that plays a role in silencing host antiviral defenses and promoting viral transcription. Does not seem to be essential for HBV infection. May be directly involved in development of cirrhosis and liver cancer (hepatocellular carcinoma). Most of cytosolic activities involve modulation of cytosolic calcium. The effect on apoptosis is controversial depending on the cell types in which the studies have been conducted. May induce apoptosis by localizing in mitochondria and causing loss of mitochondrial membrane potential. May also modulate apoptosis by binding host CFLAR, a key regulator of the death-inducing signaling complex (DISC). Promotes viral transcription by using the host E3 ubiquitin ligase DDB1 to target the SMC5-SMC6 complex to proteasomal degradation. This host complex would otherwise bind to viral episomal DNA, and prevents its transcription. Moderately stimulates transcription of many different viral and cellular transcription elements. Promoters and enhancers stimulated by HBx contain DNA binding sites for NF-kappa-B, AP-1, AP-2, c-EBP, ATF/CREB, or the calcium-activated factor NF-AT. The chain is Protein X from Homo sapiens (Human).